Consider the following 438-residue polypeptide: Lipid-A-disaccharide synthase (438 aa).

The protein belongs to the LpxB family.

It carries out the reaction a lipid X + a UDP-2-N,3-O-bis[(3R)-3-hydroxyacyl]-alpha-D-glucosamine = a lipid A disaccharide + UDP + H(+). Its pathway is bacterial outer membrane biogenesis; LPS lipid A biosynthesis. Its function is as follows. Condensation of UDP-2,3-diacylglucosamine and 2,3-diacylglucosamine-1-phosphate to form lipid A disaccharide, a precursor of lipid A, a phosphorylated glycolipid that anchors the lipopolysaccharide to the outer membrane of the cell. This Xanthomonas campestris pv. campestris (strain 8004) protein is Lipid-A-disaccharide synthase.